Consider the following 463-residue polypeptide: Argininosuccinate lyase (463 aa).

It belongs to the lyase 1 family. Argininosuccinate lyase subfamily.

It is found in the cytoplasm. It carries out the reaction 2-(N(omega)-L-arginino)succinate = fumarate + L-arginine. It participates in amino-acid biosynthesis; L-arginine biosynthesis; L-arginine from L-ornithine and carbamoyl phosphate: step 3/3. The sequence is that of Argininosuccinate lyase from Thermosynechococcus vestitus (strain NIES-2133 / IAM M-273 / BP-1).